A 456-amino-acid chain; its full sequence is MGSSEGQETHVLMVTLPFQGHINPMLKLAKHLSLSSKNLHINLATIESARDLLSTVEKPRYPVDLVFFSDGLPKEDPKAPETLLKSLNKVGAMNLSKIIEEKRYSCIISSPFTPWVPAVAASHNISCAILWIQACGAYSVYYRYYMKTNSFPDLEDLNQTVELPALPLLEVRDLPSFMLPSGGAHFYNLMAEFADCLRYVKWVLVNSFYELESEIIESMADLKPVIPIGPLVSPFLLGDGEEETLDGKNLDFCKSDDCCMEWLDKQARSSVVYISFGSMLETLENQVETIAKALKNRGLPFLWVIRPKEKAQNVAVLQEMVKEGQGVVLEWSPQEKILSHEAISCFVTHCGWNSTMETVVAGVPVVAYPSWTDQPIDARLLVDVFGIGVRMRNDSVDGELKVEEVERCIEAVTEGPAAVDIRRRAAELKRVARLALAPGGSSTRNLDLFISDITIA.

Residues Ser-278, 332–334 (SPQ), 349–357 (HCGWNSTME), and 371–374 (WTDQ) each bind UDP-alpha-D-glucose.

It belongs to the UDP-glycosyltransferase family.

Possesses low quercetin 7-O-glucosyltransferase activity in vitro. In Arabidopsis thaliana (Mouse-ear cress), this protein is UDP-glycosyltransferase 84B1 (UGT84B1).